Consider the following 459-residue polypeptide: U-box domain-containing protein 75 (459 aa).

The region spanning 64–138 (AVPAVFICPI…AAWFSRRYTR (75 aa)) is the U-box domain. ARM repeat units lie at residues 188 to 229 (QSVT…GVPL) and 231 to 270 (ADAK…ILME).

As to quaternary structure, interacts with GPA1. As to expression, expressed highly in panicles at flowering time, at moderate levels in vegetative shoot apices, leaf sheaths, leaf blades, and elongating internodes, and at low levels in roots.

The protein localises to the cell membrane. It catalyses the reaction S-ubiquitinyl-[E2 ubiquitin-conjugating enzyme]-L-cysteine + [acceptor protein]-L-lysine = [E2 ubiquitin-conjugating enzyme]-L-cysteine + N(6)-ubiquitinyl-[acceptor protein]-L-lysine.. Its pathway is protein modification; protein ubiquitination. In terms of biological role, E3 ubiquitin ligase that may function as positive regulator of brassinosteroid (BR) signaling. Possesses E3 ubiquitin ligase in vitro. Acts together with the heterotrimeric G alpha subunit GPA1 at the plasma membrane to mediate a BR signaling pathway that affects plant growth and development. Does not seem to be involved in gibberellin or cytokinin responses. The chain is U-box domain-containing protein 75 from Oryza sativa subsp. japonica (Rice).